The primary structure comprises 200 residues: Small ribosomal subunit protein uS4 (200 aa).

The 64-residue stretch at 92–155 folds into the S4 RNA-binding domain; sequence SRLDNLVYRM…RNLTVVKEAL (64 aa).

The protein belongs to the universal ribosomal protein uS4 family. In terms of assembly, part of the 30S ribosomal subunit. Contacts protein S5. The interaction surface between S4 and S5 is involved in control of translational fidelity.

Its function is as follows. One of the primary rRNA binding proteins, it binds directly to 16S rRNA where it nucleates assembly of the body of the 30S subunit. In terms of biological role, with S5 and S12 plays an important role in translational accuracy. In Shouchella clausii (strain KSM-K16) (Alkalihalobacillus clausii), this protein is Small ribosomal subunit protein uS4.